The sequence spans 365 residues: Holliday junction branch migration complex subunit RuvB (365 aa).

The span at 1-10 shows a compositional bias: polar residues; that stretch reads MAIVSSNAAS. Residues 1–48 are disordered; sequence MAIVSSNAASQRPRPDRGPDRVPNRVVDGARQAEDDRDPGRVGAKEDS. Composition is skewed to basic and acidic residues over residues 13–23 and 31–48; these read PRPDRGPDRVP and RQAE…KEDS. The tract at residues 13–210 is large ATPase domain (RuvB-L); it reads PRPDRGPDRV…FGLIQRLEFY (198 aa). Leu-49, Arg-50, Gly-91, Lys-94, Thr-95, Thr-96, Arg-200, Tyr-210, and Arg-247 together coordinate ATP. Thr-95 is a Mg(2+) binding site. The tract at residues 211–282 is small ATPAse domain (RuvB-S); the sequence is GLEDLQAIVE…LVDEALTLHR (72 aa). Residues 285 to 365 form a head domain (RuvB-H) region; sequence GRGLDASDRR…GWPYPQEQAA (81 aa). DNA is bound by residues Arg-340 and Arg-345.

It belongs to the RuvB family. In terms of assembly, homohexamer. Forms an RuvA(8)-RuvB(12)-Holliday junction (HJ) complex. HJ DNA is sandwiched between 2 RuvA tetramers; dsDNA enters through RuvA and exits via RuvB. An RuvB hexamer assembles on each DNA strand where it exits the tetramer. Each RuvB hexamer is contacted by two RuvA subunits (via domain III) on 2 adjacent RuvB subunits; this complex drives branch migration. In the full resolvosome a probable DNA-RuvA(4)-RuvB(12)-RuvC(2) complex forms which resolves the HJ.

Its subcellular location is the cytoplasm. The enzyme catalyses ATP + H2O = ADP + phosphate + H(+). Its function is as follows. The RuvA-RuvB-RuvC complex processes Holliday junction (HJ) DNA during genetic recombination and DNA repair, while the RuvA-RuvB complex plays an important role in the rescue of blocked DNA replication forks via replication fork reversal (RFR). RuvA specifically binds to HJ cruciform DNA, conferring on it an open structure. The RuvB hexamer acts as an ATP-dependent pump, pulling dsDNA into and through the RuvAB complex. RuvB forms 2 homohexamers on either side of HJ DNA bound by 1 or 2 RuvA tetramers; 4 subunits per hexamer contact DNA at a time. Coordinated motions by a converter formed by DNA-disengaged RuvB subunits stimulates ATP hydrolysis and nucleotide exchange. Immobilization of the converter enables RuvB to convert the ATP-contained energy into a lever motion, pulling 2 nucleotides of DNA out of the RuvA tetramer per ATP hydrolyzed, thus driving DNA branch migration. The RuvB motors rotate together with the DNA substrate, which together with the progressing nucleotide cycle form the mechanistic basis for DNA recombination by continuous HJ branch migration. Branch migration allows RuvC to scan DNA until it finds its consensus sequence, where it cleaves and resolves cruciform DNA. The polypeptide is Holliday junction branch migration complex subunit RuvB (Synechococcus sp. (strain WH7803)).